The sequence spans 259 residues: UPF0246 protein NMA1114 (259 aa).

This sequence belongs to the UPF0246 family.

The protein is UPF0246 protein NMA1114 of Neisseria meningitidis serogroup A / serotype 4A (strain DSM 15465 / Z2491).